Reading from the N-terminus, the 200-residue chain is GMP synthase [glutamine-hydrolyzing] subunit A (200 aa).

The Glutamine amidotransferase type-1 domain maps to 3-193 (KIYVVDNGGQ…IGICASYREI (191 aa)). Residue Cys80 is the Nucleophile of the active site. Catalysis depends on residues His167 and Glu169.

Heterodimer composed of a glutamine amidotransferase subunit (A) and a GMP-binding subunit (B).

It carries out the reaction XMP + L-glutamine + ATP + H2O = GMP + L-glutamate + AMP + diphosphate + 2 H(+). It participates in purine metabolism; GMP biosynthesis; GMP from XMP (L-Gln route): step 1/1. Functionally, catalyzes the synthesis of GMP from XMP. The protein is GMP synthase [glutamine-hydrolyzing] subunit A of Thermoplasma acidophilum (strain ATCC 25905 / DSM 1728 / JCM 9062 / NBRC 15155 / AMRC-C165).